The chain runs to 994 residues: Myosin IA heavy chain (994 aa).

One can recognise a Myosin motor domain in the interval 12–720 (VGVEDLIMLT…PLFLLEDKRN (709 aa)). ATP is bound at residue 105-112 (GESGAGKT). An actin-binding region spans residues 574 to 654 (TFIPTDKKRP…RAGYCYRQTF (81 aa)). IQ domains follow at residues 723-744 (LNDLATKIGSVWKMYKQRKWYL) and 745-774 (RTLAAIKIQRTYRGWLLVRECVKLKNQSIS). The 189-residue stretch at 782–970 (RNRQSIKLSK…ANSPSFTAKA (189 aa)) folds into the TH1 domain.

Belongs to the TRAFAC class myosin-kinesin ATPase superfamily. Myosin family. In terms of assembly, myosin I heavy chain is single-headed. Dimer of a heavy and a light chain. Inability to self-assemble into filaments.

Its function is as follows. Actin-based motor protein, possibly involved in a wide range of motile processes, such as cell movement across a surface, and extension and retraction of pseudopodia or lamellipodia. The polypeptide is Myosin IA heavy chain (myoA) (Dictyostelium discoideum (Social amoeba)).